We begin with the raw amino-acid sequence, 350 residues long: Inner membrane protein YhiM (350 aa).

Residues 1 to 2 lie on the Cytoplasmic side of the membrane; sequence MN. Residues 3 to 23 form a helical membrane-spanning segment; the sequence is IYIGWLFKLIPLIMGLICIAL. Residues 24–41 lie on the Periplasmic side of the membrane; it reads GGFVLESSGQSEYFVAGH. A helical transmembrane segment spans residues 42-62; sequence VLISLAAICLALFTTAFIIIS. At 63–74 the chain is on the cytoplasmic side; sequence QLTRGVNTFYNT. Residues 75 to 95 traverse the membrane as a helical segment; the sequence is LFPIIGYAGSIITMIWGWALL. At 96-104 the chain is on the periplasmic side; it reads AGNDVMADE. A helical transmembrane segment spans residues 105–125; the sequence is FVAGHVIFGVGMIAACVSTVA. The Cytoplasmic portion of the chain corresponds to 126 to 157; it reads ASSGHFLLIPKNAAGSKSDGTPVQAYSSLIGN. The chain crosses the membrane as a helical span at residues 158 to 178; it reads CLIAVPVLLTLLGFIWSITLL. Over 179–190 the chain is Periplasmic; the sequence is RSADITPHYVAG. Residues 191–211 form a helical membrane-spanning segment; that stretch reads HVLLGLTAICACLIGLVATIV. Residues 212-225 are Cytoplasmic-facing; the sequence is HQTRNTFSTKEHWL. A helical membrane pass occupies residues 226–246; that stretch reads WCYWVIFLGSITVLQGIYVLV. Residues 247–257 are Periplasmic-facing; sequence SSDASARLAPG. The helical transmembrane segment at 258-278 threads the bilayer; sequence IILICLGMICYSIFSKVWLLA. The Cytoplasmic segment spans residues 279 to 290; sequence LVWRRTCSLANR. The helical transmembrane segment at 291–311 threads the bilayer; the sequence is IPMIPVFTCLFCLFLASFLAE. Residues 312 to 324 are Periplasmic-facing; that stretch reads MAQTDMGYFIPSR. The helical transmembrane segment at 325-345 threads the bilayer; sequence VLVGLGAVCFTLFSIVSILEA. The Cytoplasmic portion of the chain corresponds to 346-350; the sequence is GSAKK.

The protein resides in the cell inner membrane. This chain is Inner membrane protein YhiM (yhiM), found in Escherichia coli (strain K12).